The sequence spans 257 residues: 1-(5-phosphoribosyl)-5-[(5-phosphoribosylamino)methylideneamino] imidazole-4-carboxamide isomerase (257 aa).

The active-site Proton acceptor is Asp8. The active-site Proton donor is the Asp129.

It belongs to the HisA/HisF family.

Its subcellular location is the cytoplasm. It carries out the reaction 1-(5-phospho-beta-D-ribosyl)-5-[(5-phospho-beta-D-ribosylamino)methylideneamino]imidazole-4-carboxamide = 5-[(5-phospho-1-deoxy-D-ribulos-1-ylimino)methylamino]-1-(5-phospho-beta-D-ribosyl)imidazole-4-carboxamide. The protein operates within amino-acid biosynthesis; L-histidine biosynthesis; L-histidine from 5-phospho-alpha-D-ribose 1-diphosphate: step 4/9. The chain is 1-(5-phosphoribosyl)-5-[(5-phosphoribosylamino)methylideneamino] imidazole-4-carboxamide isomerase from Cyanothece sp. (strain PCC 7425 / ATCC 29141).